The chain runs to 1028 residues: Protein SMAX1-LIKE 5 (1028 aa).

In terms of domain architecture, Clp R spans 8–199 (IQQTLTTEAA…CVEDCSVSSV (192 aa)). Repeat regions lie at residues 12–102 (LTTE…LNRL) and 116–199 (LANA…VSSV). Positions 871–875 (LDLNI) match the EAR motif.

It belongs to the ClpA/ClpB family. In terms of assembly, interacts probably with TPL/TPR in an EAR-motif dependent manner. As to expression, detected in roots, seedlings and axillary branches.

In terms of biological role, may function in a transcriptional corepressor complex. The sequence is that of Protein SMAX1-LIKE 5 from Arabidopsis thaliana (Mouse-ear cress).